Reading from the N-terminus, the 550-residue chain is Formate--tetrahydrofolate ligase (550 aa).

60 to 67 (TPFGEGKT) lines the ATP pocket.

It belongs to the formate--tetrahydrofolate ligase family.

The enzyme catalyses (6S)-5,6,7,8-tetrahydrofolate + formate + ATP = (6R)-10-formyltetrahydrofolate + ADP + phosphate. It functions in the pathway one-carbon metabolism; tetrahydrofolate interconversion. This is Formate--tetrahydrofolate ligase from Campylobacter curvus (strain 525.92).